The sequence spans 269 residues: Enoyl-[acyl-carrier-protein] reductase [NADH] (269 aa).

Residues 20–21 (SI), 64–65 (DV), and 95–96 (IG) contribute to the NAD(+) site. Tyr158 provides a ligand contact to substrate. The NAD(+) site is built by Lys165 and Ile194.

It belongs to the short-chain dehydrogenases/reductases (SDR) family. FabI subfamily. Homodimer. Homotetramer.

The catalysed reaction is a 2,3-saturated acyl-[ACP] + NAD(+) = a (2E)-enoyl-[ACP] + NADH + H(+). The enzyme catalyses a 2,3-saturated acyl-CoA + NAD(+) = a (2E)-enoyl-CoA + NADH + H(+). Its pathway is lipid metabolism; mycolic acid biosynthesis. Its function is as follows. Enoyl-ACP reductase of the type II fatty acid syntase (FAS-II) system, which is involved in the biosynthesis of mycolic acids, a major component of mycobacterial cell walls. Catalyzes the NADH-dependent reduction of the double bond of 2-trans-enoyl-[acyl-carrier protein], an essential step in the fatty acid elongation cycle of the FAS-II pathway. Shows preference for long-chain fatty acyl thioester substrates, and can also use 2-trans-enoyl-CoAs as alternative substrates. The mycobacterial FAS-II system utilizes the products of the FAS-I system as primers to extend fatty acyl chain lengths up to C56, forming the meromycolate chain that serves as the precursor for final mycolic acids. In terms of biological role, is the primary target of the first-line antitubercular drug isoniazid (INH) and of the second-line drug ethionamide (ETH). Overexpressed inhA confers INH and ETH resistance to M.bovis. The mechanism of isoniazid action against InhA is covalent attachment of the activated form of the drug to the nicotinamide ring of NAD and binding of the INH-NAD adduct to the active site of InhA. Similarly, the ETH-NAD adduct binds InhA. In Mycobacterium bovis (strain ATCC BAA-935 / AF2122/97), this protein is Enoyl-[acyl-carrier-protein] reductase [NADH].